The following is a 65-amino-acid chain: Large ribosomal subunit protein bL35 (65 aa).

The disordered stretch occupies residues 28-53; that stretch reads NGSHNLEKKNRKRTRRLHQSTMLDNA. Residues 36-45 show a composition bias toward basic residues; that stretch reads KNRKRTRRLH.

This sequence belongs to the bacterial ribosomal protein bL35 family.

The polypeptide is Large ribosomal subunit protein bL35 (Chlorobium luteolum (strain DSM 273 / BCRC 81028 / 2530) (Pelodictyon luteolum)).